The chain runs to 87 residues: uncharacterized protein (87 aa).

Residues Leu21–Phe41 traverse the membrane as a helical segment.

The protein localises to the membrane. This is an uncharacterized protein from Saccharomyces cerevisiae (strain ATCC 204508 / S288c) (Baker's yeast).